A 404-amino-acid polypeptide reads, in one-letter code: 1-deoxy-D-xylulose 5-phosphate reductoisomerase (404 aa).

Threonine 5, glycine 6, serine 7, isoleucine 8, glycine 31, arginine 32, asparagine 33, and asparagine 121 together coordinate NADPH. A 1-deoxy-D-xylulose 5-phosphate-binding site is contributed by lysine 122. Glutamate 123 contributes to the NADPH binding site. Mn(2+) is bound at residue aspartate 147. Residues serine 148, glutamate 149, serine 185, and histidine 208 each coordinate 1-deoxy-D-xylulose 5-phosphate. Residue glutamate 149 coordinates Mn(2+). Glycine 214 is an NADPH binding site. 1-deoxy-D-xylulose 5-phosphate is bound by residues serine 221, asparagine 226, lysine 227, and glutamate 230. Glutamate 230 is a binding site for Mn(2+).

Belongs to the DXR family. The cofactor is Mg(2+). Mn(2+) serves as cofactor.

The enzyme catalyses 2-C-methyl-D-erythritol 4-phosphate + NADP(+) = 1-deoxy-D-xylulose 5-phosphate + NADPH + H(+). It participates in isoprenoid biosynthesis; isopentenyl diphosphate biosynthesis via DXP pathway; isopentenyl diphosphate from 1-deoxy-D-xylulose 5-phosphate: step 1/6. Catalyzes the NADPH-dependent rearrangement and reduction of 1-deoxy-D-xylulose-5-phosphate (DXP) to 2-C-methyl-D-erythritol 4-phosphate (MEP). The polypeptide is 1-deoxy-D-xylulose 5-phosphate reductoisomerase (Prochlorococcus marinus subsp. pastoris (strain CCMP1986 / NIES-2087 / MED4)).